Consider the following 79-residue polypeptide: DNA-directed RNA polymerase subunit omega (79 aa).

It belongs to the RNA polymerase subunit omega family. As to quaternary structure, the RNAP catalytic core consists of 2 alpha, 1 beta, 1 beta' and 1 omega subunit. When a sigma factor is associated with the core the holoenzyme is formed, which can initiate transcription.

It catalyses the reaction RNA(n) + a ribonucleoside 5'-triphosphate = RNA(n+1) + diphosphate. Functionally, promotes RNA polymerase assembly. Latches the N- and C-terminal regions of the beta' subunit thereby facilitating its interaction with the beta and alpha subunits. The polypeptide is DNA-directed RNA polymerase subunit omega (rpoZ) (Thermotoga maritima (strain ATCC 43589 / DSM 3109 / JCM 10099 / NBRC 100826 / MSB8)).